Reading from the N-terminus, the 280-residue chain is ATP synthase gamma chain (280 aa).

This sequence belongs to the ATPase gamma chain family. In terms of assembly, F-type ATPases have 2 components, CF(1) - the catalytic core - and CF(0) - the membrane proton channel. CF(1) has five subunits: alpha(3), beta(3), gamma(1), delta(1), epsilon(1). CF(0) has three main subunits: a, b and c.

It is found in the cell membrane. Produces ATP from ADP in the presence of a proton gradient across the membrane. The gamma chain is believed to be important in regulating ATPase activity and the flow of protons through the CF(0) complex. The chain is ATP synthase gamma chain from Mycoplasma capricolum subsp. capricolum (strain California kid / ATCC 27343 / NCTC 10154).